A 512-amino-acid polypeptide reads, in one-letter code: 2,3-bisphosphoglycerate-independent phosphoglycerate mutase (512 aa).

Mn(2+) is bound by residues aspartate 12 and serine 62. Catalysis depends on serine 62, which acts as the Phosphoserine intermediate. Residues histidine 123, arginine 153–aspartate 154, arginine 185, arginine 191, arginine 260–arginine 263, and lysine 333 each bind substrate. Aspartate 400, histidine 404, aspartate 441, histidine 442, and histidine 460 together coordinate Mn(2+).

The protein belongs to the BPG-independent phosphoglycerate mutase family. Monomer. Requires Mn(2+) as cofactor.

The enzyme catalyses (2R)-2-phosphoglycerate = (2R)-3-phosphoglycerate. It participates in carbohydrate degradation; glycolysis; pyruvate from D-glyceraldehyde 3-phosphate: step 3/5. Its function is as follows. Catalyzes the interconversion of 2-phosphoglycerate and 3-phosphoglycerate. The polypeptide is 2,3-bisphosphoglycerate-independent phosphoglycerate mutase (Clostridium perfringens (strain 13 / Type A)).